The primary structure comprises 385 residues: MSRPQLRRWRLVSSPPSGVPGLALLALLALLALRLAAGTDCPCPEPELCRPIRHHPDFEVFVFDVGQKTWKSYDWSQITTVATFGKYDSELMCYAHSKGARVVLKGDVSLKDIIDPAFRASWIAQKLNLAKTQYMDGINIDIEQEVNCLSPEYDALTALVKETTDSFHREIEGSQVTFDVAWSPKNIDRRCYNYTGIADACDFLFVMSYDEQSQIWSECIAAANAPYNQTLTGYNDYIKMSINPKKLVMGVPWYGYDYTCLNLSEDHVCTIAKVPFRGAPCSDAAGRQVPYKTIMKQINSSISGNLWDKDQRAPYYNYKDPAGHFHQVWYDNPQSISLKATYIQNYRLRGIGMWNANCLDYSGDAVAKQQTEEMWEVLKPKLLQR.

Residues methionine 1 to glycine 38 form the signal peptide. Positions threonine 39 to arginine 385 constitute a GH18 domain. Catalysis depends on glutamate 143, which acts as the Proton donor. N-linked (GlcNAc...) asparagine glycosylation is found at asparagine 193, asparagine 228, asparagine 262, and asparagine 299.

The protein belongs to the glycosyl hydrolase 18 family.

The protein localises to the lysosome. Involved in the degradation of asparagine-linked glycoproteins. Hydrolyze of N-acetyl-beta-D-glucosamine (1-4)N-acetylglucosamine chitobiose core from the reducing end of the bond, it requires prior cleavage by glycosylasparaginase. The sequence is that of Di-N-acetylchitobiase (CTBS) from Homo sapiens (Human).